A 226-amino-acid chain; its full sequence is Leucyl/phenylalanyl-tRNA--protein transferase (226 aa).

It belongs to the L/F-transferase family.

The protein resides in the cytoplasm. The enzyme catalyses N-terminal L-lysyl-[protein] + L-leucyl-tRNA(Leu) = N-terminal L-leucyl-L-lysyl-[protein] + tRNA(Leu) + H(+). It catalyses the reaction N-terminal L-arginyl-[protein] + L-leucyl-tRNA(Leu) = N-terminal L-leucyl-L-arginyl-[protein] + tRNA(Leu) + H(+). The catalysed reaction is L-phenylalanyl-tRNA(Phe) + an N-terminal L-alpha-aminoacyl-[protein] = an N-terminal L-phenylalanyl-L-alpha-aminoacyl-[protein] + tRNA(Phe). Functionally, functions in the N-end rule pathway of protein degradation where it conjugates Leu, Phe and, less efficiently, Met from aminoacyl-tRNAs to the N-termini of proteins containing an N-terminal arginine or lysine. The chain is Leucyl/phenylalanyl-tRNA--protein transferase from Pseudomonas fluorescens (strain SBW25).